The chain runs to 472 residues: Cell division protein FtsP (472 aa).

Positions 1–32 form a signal peptide, tat-type signal; it reads MSLSRRRFIQASGLALCAGGLPLQARASGAQA.

This sequence belongs to the FtsP family. Predicted to be exported by the Tat system. The position of the signal peptide cleavage has not been experimentally proven.

Its subcellular location is the periplasm. Its function is as follows. Cell division protein that is required for growth during stress conditions. May be involved in protecting or stabilizing the divisomal assembly under conditions of stress. The chain is Cell division protein FtsP from Edwardsiella tarda (strain FL6-60).